The chain runs to 255 residues: Type III pantothenate kinase (255 aa).

6–13 is a binding site for ATP; the sequence is DVGNTNTV. Residues Tyr-100 and 107–110 contribute to the substrate site; that span reads GADR. The Proton acceptor role is filled by Asp-109. Asp-129 is a binding site for K(+). Thr-132 contacts ATP. Residue Thr-184 coordinates substrate.

The protein belongs to the type III pantothenate kinase family. As to quaternary structure, homodimer. NH4(+) serves as cofactor. The cofactor is K(+).

It localises to the cytoplasm. The catalysed reaction is (R)-pantothenate + ATP = (R)-4'-phosphopantothenate + ADP + H(+). The protein operates within cofactor biosynthesis; coenzyme A biosynthesis; CoA from (R)-pantothenate: step 1/5. Its function is as follows. Catalyzes the phosphorylation of pantothenate (Pan), the first step in CoA biosynthesis. This Syntrophotalea carbinolica (strain DSM 2380 / NBRC 103641 / GraBd1) (Pelobacter carbinolicus) protein is Type III pantothenate kinase.